The sequence spans 76 residues: Gas vesicle protein A1 (76 aa).

2 binds to GvpF1 regions span residues methionine 1–valine 22 and alanine 2–valine 43. The alpha helix 1 stretch occupies residues leucine 9–lysine 19. The interval valine 23–leucine 31 is beta-strand 1. The tract at residues valine 32–isoleucine 34 is beta turn. Residues glutamate 35–valine 43 are beta-strand 2. The alpha helix 2 stretch occupies residues valine 48–threonine 67.

This sequence belongs to the gas vesicle GvpA family. Major component of the gas vesicle shell which is 2 nm thick and consists of a single layer of the protein. It forms 4.6 nm-wide ribs nearly perpendicular to the long axis of the vesicle. Modeled as antiparallel homodimers. The ribs form a low-pitch helix rather than a stack of hoops. Interacts with GvpF1 via its N-terminus (residues 1-43) in early growth stages, none of the other GvpG1 to GvpM1 proteins were seen to directly bind GvpA1 in H.volcanii experiments. Might interact with GvpJ1. Might interact with GvpG1, GvpH1, GvpJ1, GvpM1, GvpN1 and GvpO1.

It localises to the gas vesicle shell. In terms of biological role, gas vesicles are hollow, gas filled proteinaceous nanostructures found in several microbial planktonic microorganisms. They allow positioning of halobacteria at the optimal depth for growth in the poorly aerated shallow brine pools of their habitat. GvpA forms the protein shell. The critical collapse pressure (CCP) of p-vac gas vesicles is 0.66 MPa; mutating residues in p-gvpA to those found in c-gvpA increases the CCP. These residues partially and independently control the width and strength of gas vesicles. In stationary phase gas vesicles, about 30 times more GvpA1 is found than GvpA2. Expression of a 9.5 kb p-vac DNA fragment containing 2 divergently transcribed regions (gvpD-gvpE-gvpF-gvpG-gvpH-gvpI-gvpJ-gvpK-gvpL-gvpM and gvpA-gvpC-gvpN-gvpO) allows H.volcanii to produce gas vesicles. All site-directed mutagenesis is tested in H.volcanii. A minimal gas vesicle can be made in H.volcanii by gvpA1-gvpO1 plus gvpF1-gvpG1-gvpJ1-gvpK1-gvpL1-gvpM1; lack of enough GvpJ1 prevents their formation. A similar region restores gas vesicle production in H.halobium without the p-vac locus, but it still has the c-vac locus. This Halobacterium salinarum (strain ATCC 700922 / JCM 11081 / NRC-1) (Halobacterium halobium) protein is Gas vesicle protein A1.